The following is a 103-amino-acid chain: Histone H4 (103 aa).

Over residues M1–G14 the composition is skewed to gly residues. Positions M1–R20 are disordered. T2 carries the post-translational modification N-acetylthreonine. At K6 the chain carries N6-acetyl-N6-methyllysine; alternate. N6-acetyllysine is present on residues K6, K9, K13, and K17. K13 carries the post-translational modification N6-acetyl-N6-methyllysine; alternate. The residue at position 21 (K21) is an N6,N6-dimethyllysine. The residue at position 32 (K32) is an N6-methyllysine.

The protein belongs to the histone H4 family. In terms of assembly, the nucleosome is a histone octamer containing two molecules each of H2A, H2B, H3 and H4 assembled in one H3-H4 heterotetramer and two H2A-H2B heterodimers. The octamer wraps approximately 147 bp of DNA.

The protein localises to the nucleus. It localises to the chromosome. Functionally, core component of nucleosome. Nucleosomes wrap and compact DNA into chromatin, limiting DNA accessibility to the cellular machineries which require DNA as a template. Histones thereby play a central role in transcription regulation, DNA repair, DNA replication and chromosomal stability. DNA accessibility is regulated via a complex set of post-translational modifications of histones, also called histone code, and nucleosome remodeling. A mixture of histones H2B and H4 has antimicrobial activity against the Gram-positive bacterium M.luteus. This is Histone H4 from Penaeus vannamei (Whiteleg shrimp).